Consider the following 211-residue polypeptide: Transmembrane protein 247 (211 aa).

Composition is skewed to basic and acidic residues over residues 1–10 (MAMEDREVME) and 31–45 (PEGK…EVPK). The segment at 1-90 (MAMEDREVME…AGDGPGLESV (90 aa)) is disordered. Residues 63 to 73 (PGPPRSLPPKS) are compositionally biased toward pro residues. Residues 119-148 (KYLHQENERQRQHEEVMEQLQQQQQQQQAL) are a coiled coil. Transmembrane regions (helical) follow at residues 159–179 (LLLP…IHII) and 186–206 (VFFL…LCLI).

The protein resides in the membrane. The protein is Transmembrane protein 247 (Tmem247) of Mus musculus (Mouse).